The chain runs to 335 residues: DNA-directed RNA polymerase subunit alpha (335 aa).

The interval 1-231 (MVREKVTVST…DLFIPFLHME (231 aa)) is alpha N-terminal domain (alpha-NTD). The segment at 262–335 (KKKLSLESIF…FALDLPKNLN (74 aa)) is alpha C-terminal domain (alpha-CTD).

It belongs to the RNA polymerase alpha chain family. In terms of assembly, in plastids the minimal PEP RNA polymerase catalytic core is composed of four subunits: alpha, beta, beta', and beta''. When a (nuclear-encoded) sigma factor is associated with the core the holoenzyme is formed, which can initiate transcription.

It is found in the plastid. It catalyses the reaction RNA(n) + a ribonucleoside 5'-triphosphate = RNA(n+1) + diphosphate. Its function is as follows. DNA-dependent RNA polymerase catalyzes the transcription of DNA into RNA using the four ribonucleoside triphosphates as substrates. This Cuscuta reflexa (Southern Asian dodder) protein is DNA-directed RNA polymerase subunit alpha.